The sequence spans 462 residues: Lysyl endopeptidase (462 aa).

Residues 1–24 (MHKRTYLNACLVLALAAGASQALA) form the signal peptide. The propeptide occupies 25–211 (APGASEMAGD…VSYFADSLYK (187 aa)). 3 disulfides stabilise this stretch: Cys224–Cys435, Cys230–Cys305, and Cys262–Cys284. Catalysis depends on charge relay system residues His283, Asp333, and Ser409.

Belongs to the peptidase S1 family. Post-translationally, experiments performed in E.coli. Processing of pro-endopeptidase to mature endopeptidase is probably autocatalytic, as mutations in the probable active site residues prevent processing, and purified inactive pro-endopeptidase disappears in the presence of active endopeptidase.

It localises to the secreted. The catalysed reaction is Preferential cleavage: Lys-|-Xaa, including Lys-|-Pro.. Functionally, lysine-specific endoprotease. Involved in corneal virulence. The polypeptide is Lysyl endopeptidase (prpL) (Pseudomonas aeruginosa (strain ATCC 15692 / DSM 22644 / CIP 104116 / JCM 14847 / LMG 12228 / 1C / PRS 101 / PAO1)).